Here is a 144-residue protein sequence, read N- to C-terminus: Maximins 3/H16 (144 aa).

An N-terminal signal peptide occupies residues 1–18 (MNFKYIVAVSFLIASAYA). 2 consecutive propeptides follow at residues 19-43 (RSVQNDEQSLSQRDVLEEESLREIR) and 73-122 (RTAE…KKEK). Isoleucine amide is present on isoleucine 143.

The protein belongs to the bombinin family. In terms of tissue distribution, expressed by the skin glands.

The protein localises to the secreted. In terms of biological role, maximin-3 shows antibacterial activity against both Gram-positive and Gram-negative bacteria. It also shows antimicrobial activity against the fungus C.albicans, but not against A.flavus nor P.uticale. It has little hemolytic activity. It possess a significant cytotoxicity against tumor cell lines. It possess a significant anti-HIV activity. It shows high spermicidal activity. Its function is as follows. Maximin-H16 shows antimicrobial activity against bacteria and against the fungus C.albicans. Shows strong hemolytic activity. This chain is Maximins 3/H16, found in Bombina maxima (Giant fire-bellied toad).